We begin with the raw amino-acid sequence, 555 residues long: Galectin-3-binding protein (555 aa).

A signal peptide spans 1–18 (MAPLRLFWIWLLVVGTRG). An SRCR domain is found at 24 to 124 (MRLADGGSAN…HDKDASVICT (101 aa)). Cystine bridges form between Cys-49-Cys-113, Cys-62-Cys-123, and Cys-93-Cys-103. A glycan (N-linked (GlcNAc...) asparagine) is linked at Asn-69. Asn-125 carries N-linked (GlcNAc...) asparagine glycosylation. Residues 153-221 (CDLFITVKVR…LYSRRIDVSL (69 aa)) enclose the BTB domain. One can recognise a BACK domain in the interval 260–360 (PLELYAYALA…MPPQDLFSLQ (101 aa)). 3 N-linked (GlcNAc...) asparagine glycosylation sites follow: Asn-362, Asn-398, and Asn-550.

As to quaternary structure, homodimers and homomultimers. The multimers form ring-like structures with a diameter of 30-40 nm. Binds LGALS1 and LGALS3. Binds ITGB1, COL4A1, COL5A1, COL6A1, FN1 and NID. Interacts with the gamma-tubulin ring complex (gamma-TuRC), composed of gamma-tubulin, TUBGCP2, TUBGCP3, TUBGCP4, TUBGCP5 and TUBGCP6. The unglycosylated form interacts with PDE4DIP; this interaction, which is PDE4DIP isoform-specific, may connect a pericentrosomal complex, made of AKAP9, CDK5RAP2, EB1/MAPRE1 and PDE4DIP, to the gamma-tubulin ring complex (gamma-TuRC) to promote microtubule assembly and acetylation.

Its subcellular location is the secreted. It is found in the extracellular space. It localises to the extracellular matrix. Functionally, promotes integrin-mediated cell adhesion. May stimulate host defense against viruses and tumor cells. This is Galectin-3-binding protein (LGALS3BP) from Bos taurus (Bovine).